The chain runs to 136 residues: Large ribosomal subunit protein bL17 (136 aa).

This sequence belongs to the bacterial ribosomal protein bL17 family. As to quaternary structure, part of the 50S ribosomal subunit. Contacts protein L32.

This is Large ribosomal subunit protein bL17 from Rhodopseudomonas palustris (strain BisA53).